A 597-amino-acid chain; its full sequence is Ribosomal oxygenase 1 (597 aa).

N-acetylmethionine is present on M1. The interval 1–138 (MDELPNGNGA…HVDDPERPWD (138 aa)) is disordered. Composition is skewed to basic residues over residues 14-24 (KRGRGRRRRQP) and 37-48 (RPRKVRRHRKSA). Residues 49-62 (ASRVAALRARALLS) are compositionally biased toward low complexity. Phosphoserine is present on residues S62 and S65. Over residues 72–81 (VRGKRERPAE) the composition is skewed to basic and acidic residues. Phosphoserine is present on S86. A JmjC domain is found at 250–395 (CSLRLLCPQA…DFLEAVLPLA (146 aa)). Fe cation-binding residues include H296, D298, and H361.

The protein belongs to the ROX family. NO66 subfamily. As to quaternary structure, interacts with SP7/OSX; the interaction is direct. Interacts with MYC. Interacts with PHF19; leading to its recruitment to H3K36me3 sites. It depends on Fe(2+) as a cofactor.

It localises to the nucleus. The protein resides in the nucleolus. Its subcellular location is the nucleoplasm. It catalyses the reaction N(6),N(6)-dimethyl-L-lysyl(36)-[histone H3] + 2 2-oxoglutarate + 2 O2 = L-lysyl(36)-[histone H3] + 2 formaldehyde + 2 succinate + 2 CO2. It carries out the reaction N(6)-methyl-L-lysyl-[protein] + 2-oxoglutarate + O2 = L-lysyl-[protein] + formaldehyde + succinate + CO2. The enzyme catalyses L-histidyl-[protein] + 2-oxoglutarate + O2 = (3S)-3-hydroxy-L-histidyl-[protein] + succinate + CO2. Its function is as follows. Oxygenase that can act as both a histone lysine demethylase and a ribosomal histidine hydroxylase. Specifically demethylates 'Lys-4' (H3K4me) and 'Lys-36' (H3K36me) of histone H3, thereby playing a central role in histone code. Preferentially demethylates trimethylated H3 'Lys-4' (H3K4me3) and monomethylated H3 'Lys-4' (H3K4me1) residues, while it has weaker activity for dimethylated H3 'Lys-36' (H3K36me2). Acts as a regulator of osteoblast differentiation via its interaction with SP7/OSX by demethylating H3K4me and H3K36me, thereby inhibiting SP7/OSX-mediated promoter activation. Also catalyzes demethylation of non-histone proteins, such as CGAS: demethylation of monomethylated CGAS promotes interaction between CGAS and PARP1, followed by PARP1 inactivation. Also catalyzes the hydroxylation of 60S ribosomal protein L8 on 'His-216', thereby playing a role in ribosome biogenesis. Participates in MYC-induced transcriptional activation. The chain is Ribosomal oxygenase 1 from Rattus norvegicus (Rat).